We begin with the raw amino-acid sequence, 143 residues long: Large ribosomal subunit protein uL11 (143 aa).

This sequence belongs to the universal ribosomal protein uL11 family. As to quaternary structure, part of the ribosomal stalk of the 50S ribosomal subunit. Interacts with L10 and the large rRNA to form the base of the stalk. L10 forms an elongated spine to which L12 dimers bind in a sequential fashion forming a multimeric L10(L12)X complex. Post-translationally, one or more lysine residues are methylated.

Its function is as follows. Forms part of the ribosomal stalk which helps the ribosome interact with GTP-bound translation factors. The sequence is that of Large ribosomal subunit protein uL11 from Zymomonas mobilis subsp. mobilis (strain ATCC 31821 / ZM4 / CP4).